Consider the following 158-residue polypeptide: Glycine-rich RNA-binding protein 2, mitochondrial (158 aa).

Residues 1–34 constitute a mitochondrion transit peptide; it reads MAFCNKLGGLLRQNISSNGNVPVTSMLGSLRLMS. Residues 35-113 enclose the RRM domain; it reads TKLFIGGLSW…RHIRVNPAND (79 aa). Position 43 is a phosphoserine (S43). The interval 122-157 is glycine-rich (GR) required for cell-to-cell movement; that stretch reads GGGGGYSGGGGGYGGGGGGYGGGGGGYGGGGDGGGG.

This sequence belongs to the GR-RBP family. As to quaternary structure, binds to small phloem-mobile single-stranded RNAs (ss-sRNA, e.g. small interfering RNA (siRNA) and microRNA (miRNA)) in the phloeme exudate, including viral-derived sRNA (vsiRNA). Interacts with ORRM2, RBG3/ORRM3 and RBG5/ORRM4.

The protein localises to the mitochondrion. The protein resides in the secreted. Its function is as follows. Promotes the cis-splicing and editing of several mitochondrial RNAs (including NAD5 transcripts). Plays a role in RNA transcription or processing during stress. Binds RNAs and DNAs sequence with a preference to single-stranded nucleic acids. Displays strong affinity to poly(U) sequence. Exerts cold and freezing tolerance, probably by exhibiting an RNA chaperone activity during the cold and freezing adaptation process. Mediates cell-to-cell trafficking of RNA interference (RNAi) signals (small RNAs (sRNA), e.g. small interfering RNA (siRNA) and microRNA (miRNA)) which regulate growth and development, as well as responses to environmental inputs, including pathogen attack; can compromise zucchini yellow mosaic virus (ZYMV) and tobacco rattle virus (TRV) infections at the early stage. This Arabidopsis thaliana (Mouse-ear cress) protein is Glycine-rich RNA-binding protein 2, mitochondrial.